The primary structure comprises 1029 residues: E3 ubiquitin-protein ligase UPL6 (1029 aa).

The disordered stretch occupies residues 1-20 (MFFSGDPSTRKRVDLGGRST). The segment covering 8–20 (STRKRVDLGGRST) has biased composition (basic and acidic residues). One can recognise an IQ domain in the interval 45–74 (QNSAALKIQKFFRGRRSMAIERSKVRHDFC). One can recognise an HECT domain in the interval 688-1029 (SEDDLRSSIR…ISAEAGFDLS (342 aa)). The Glycyl thioester intermediate role is filled by C997.

Belongs to the UPL family.

It catalyses the reaction S-ubiquitinyl-[E2 ubiquitin-conjugating enzyme]-L-cysteine + [acceptor protein]-L-lysine = [E2 ubiquitin-conjugating enzyme]-L-cysteine + N(6)-ubiquitinyl-[acceptor protein]-L-lysine.. Its pathway is protein modification; protein ubiquitination. Its function is as follows. Probable E3 ubiquitin-protein ligase which mediates ubiquitination and subsequent proteasomal degradation of target proteins. This chain is E3 ubiquitin-protein ligase UPL6 (UPL6), found in Arabidopsis thaliana (Mouse-ear cress).